The primary structure comprises 356 residues: Outer membrane protein Omp38 (356 aa).

The N-terminal stretch at 1-19 (MKLSRIALATMLVAAPLAA) is a signal peptide. The OmpA-like domain occupies 221 to 339 (ELTEDLNMEL…RVFATITGSR (119 aa)).

It belongs to the outer membrane OOP (TC 1.B.6) superfamily. Homotrimer.

It is found in the cell outer membrane. In terms of biological role, porin. Induces apoptosis in human cells through caspases-dependent and AIF-dependent pathways. Purified Omp38 enters the cells and localizes to the mitochondria, which leads to a release of proapoptotic molecules such as cytochrome c and AIF (apoptosis-inducing factor). This Acinetobacter baumannii (strain ATCC 17978 / DSM 105126 / CIP 53.77 / LMG 1025 / NCDC KC755 / 5377) protein is Outer membrane protein Omp38 (omp38).